The chain runs to 365 residues: Chorismate synthase (365 aa).

NADP(+) contacts are provided by Arg48 and Arg54. FMN is bound by residues 125–127 (RSS), 237–238 (NA), Gly277, 292–296 (KPTSS), and Arg318.

This sequence belongs to the chorismate synthase family. As to quaternary structure, homotetramer. FMNH2 serves as cofactor.

It carries out the reaction 5-O-(1-carboxyvinyl)-3-phosphoshikimate = chorismate + phosphate. The protein operates within metabolic intermediate biosynthesis; chorismate biosynthesis; chorismate from D-erythrose 4-phosphate and phosphoenolpyruvate: step 7/7. Functionally, catalyzes the anti-1,4-elimination of the C-3 phosphate and the C-6 proR hydrogen from 5-enolpyruvylshikimate-3-phosphate (EPSP) to yield chorismate, which is the branch point compound that serves as the starting substrate for the three terminal pathways of aromatic amino acid biosynthesis. This reaction introduces a second double bond into the aromatic ring system. This Paracidovorax citrulli (strain AAC00-1) (Acidovorax citrulli) protein is Chorismate synthase.